Here is a 130-residue protein sequence, read N- to C-terminus: Cystatin (130 aa).

Positions 1-19 (MEWKIVVPLFAVAFTVANA) are cleaved as a signal peptide. The short motif at 67 to 71 (QVVSG) is the Secondary area of contact element. 2 disulfides stabilise this stretch: Cys85/Cys94 and Cys108/Cys128.

Belongs to the cystatin family.

The protein resides in the secreted. Functionally, cysteine proteinase inhibitor. The protein is Cystatin of Oncorhynchus mykiss (Rainbow trout).